The sequence spans 352 residues: ATPase GET3 (352 aa).

ATP is bound at residue 26 to 33; the sequence is KGGVGKTT. The active site involves aspartate 57. Glutamate 243 and asparagine 270 together coordinate ATP. 2 residues coordinate Zn(2+): cysteine 283 and cysteine 286.

The protein belongs to the arsA ATPase family. Homodimer. Component of the Golgi to ER traffic (GET) complex, which is composed of GET1, GET2 and GET3. Within the complex, GET1 and GET2 form a heterotetramer which is stabilized by phosphatidylinositol binding and which binds to the GET3 homodimer. Interacts with the chloride channel protein GEF1.

It localises to the cytoplasm. The protein localises to the endoplasmic reticulum. It is found in the golgi apparatus. Its function is as follows. ATPase required for the post-translational delivery of tail-anchored (TA) proteins to the endoplasmic reticulum. Recognizes and selectively binds the transmembrane domain of TA proteins in the cytosol. This complex then targets to the endoplasmic reticulum by membrane-bound receptors GET1 and GET2, where the tail-anchored protein is released for insertion. This process is regulated by ATP binding and hydrolysis. ATP binding drives the homodimer towards the closed dimer state, facilitating recognition of newly synthesized TA membrane proteins. ATP hydrolysis is required for insertion. Subsequently, the homodimer reverts towards the open dimer state, lowering its affinity for the GET1-GET2 receptor, and returning it to the cytosol to initiate a new round of targeting. Cooperates with the HDEL receptor ERD2 to mediate the ATP-dependent retrieval of resident ER proteins that contain a C-terminal H-D-E-L retention signal from the Golgi to the ER. Involved in low-level resistance to the oxyanions arsenite and arsenate, and in heat tolerance. The polypeptide is ATPase GET3 (Vanderwaltozyma polyspora (strain ATCC 22028 / DSM 70294 / BCRC 21397 / CBS 2163 / NBRC 10782 / NRRL Y-8283 / UCD 57-17) (Kluyveromyces polysporus)).